We begin with the raw amino-acid sequence, 141 residues long: Probable mitochondrial pyruvate carrier 1 (141 aa).

2 helical membrane-spanning segments follow: residues 31–52 (YLCS…AAIL) and 60–82 (LISG…YAWM).

It belongs to the mitochondrial pyruvate carrier (MPC) (TC 2.A.105) family. In terms of assembly, the functional 150 kDa pyruvate import complex is a heteromer of mpc1 and mpc2.

The protein resides in the mitochondrion. It is found in the mitochondrion inner membrane. Mediates the uptake of pyruvate into mitochondria. This chain is Probable mitochondrial pyruvate carrier 1, found in Schizosaccharomyces pombe (strain 972 / ATCC 24843) (Fission yeast).